A 340-amino-acid chain; its full sequence is Phosphoribosylformylglycinamidine cyclo-ligase (340 aa).

Belongs to the AIR synthase family.

It localises to the cytoplasm. It catalyses the reaction 2-formamido-N(1)-(5-O-phospho-beta-D-ribosyl)acetamidine + ATP = 5-amino-1-(5-phospho-beta-D-ribosyl)imidazole + ADP + phosphate + H(+). Its pathway is purine metabolism; IMP biosynthesis via de novo pathway; 5-amino-1-(5-phospho-D-ribosyl)imidazole from N(2)-formyl-N(1)-(5-phospho-D-ribosyl)glycinamide: step 2/2. This chain is Phosphoribosylformylglycinamidine cyclo-ligase, found in Streptococcus pyogenes serotype M1.